A 192-amino-acid polypeptide reads, in one-letter code: Pyridoxal 5'-phosphate synthase subunit PdxT (192 aa).

L-glutamine is bound at residue 46–48; that stretch reads GES. The active-site Nucleophile is the Cys78. L-glutamine-binding positions include Arg106 and 135-136; that span reads IR. Residues His171 and Glu173 each act as charge relay system in the active site.

Belongs to the glutaminase PdxT/SNO family. As to quaternary structure, in the presence of PdxS, forms a dodecamer of heterodimers. Only shows activity in the heterodimer.

The catalysed reaction is aldehydo-D-ribose 5-phosphate + D-glyceraldehyde 3-phosphate + L-glutamine = pyridoxal 5'-phosphate + L-glutamate + phosphate + 3 H2O + H(+). The enzyme catalyses L-glutamine + H2O = L-glutamate + NH4(+). The protein operates within cofactor biosynthesis; pyridoxal 5'-phosphate biosynthesis. Catalyzes the hydrolysis of glutamine to glutamate and ammonia as part of the biosynthesis of pyridoxal 5'-phosphate. The resulting ammonia molecule is channeled to the active site of PdxS. This is Pyridoxal 5'-phosphate synthase subunit PdxT from Kosmotoga olearia (strain ATCC BAA-1733 / DSM 21960 / TBF 19.5.1).